Consider the following 248-residue polypeptide: MEMPIIKLKNFDGPFDLLLHLIKKNEMSITEIKIHEITKQYLEYIALMKELDLEITSEFIVMAATLIEIKSKSLLPKVKVEDETCEEDLQKILMEKLQEYKKFKKISAYLRERELSTGEVFTKKAEIIEVEADNKLDDDYFKNITMLDLYKLYNNLMRIYGEKQNVNVMEKKISVDKYKITDKINFLRDKLSEKSVVRFSEFIPQCECKLEVVVTFMAMLELIKRSEIKVIQYENFGEIMMEKVIVNE.

The protein belongs to the ScpA family. Component of a cohesin-like complex composed of ScpA, ScpB and the Smc homodimer, in which ScpA and ScpB bind to the head domain of Smc. The presence of the three proteins is required for the association of the complex with DNA.

The protein localises to the cytoplasm. In terms of biological role, participates in chromosomal partition during cell division. May act via the formation of a condensin-like complex containing Smc and ScpB that pull DNA away from mid-cell into both cell halves. In Clostridium perfringens (strain SM101 / Type A), this protein is Segregation and condensation protein A.